The primary structure comprises 164 residues: Crossover junction endodeoxyribonuclease RuvC (164 aa).

Active-site residues include Asp-7, Glu-67, and Asp-140. Residues Asp-7, Glu-67, and Asp-140 each contribute to the Mg(2+) site.

It belongs to the RuvC family. As to quaternary structure, homodimer which binds Holliday junction (HJ) DNA. The HJ becomes 2-fold symmetrical on binding to RuvC with unstacked arms; it has a different conformation from HJ DNA in complex with RuvA. In the full resolvosome a probable DNA-RuvA(4)-RuvB(12)-RuvC(2) complex forms which resolves the HJ. Mg(2+) serves as cofactor.

It is found in the cytoplasm. The catalysed reaction is Endonucleolytic cleavage at a junction such as a reciprocal single-stranded crossover between two homologous DNA duplexes (Holliday junction).. In terms of biological role, the RuvA-RuvB-RuvC complex processes Holliday junction (HJ) DNA during genetic recombination and DNA repair. Endonuclease that resolves HJ intermediates. Cleaves cruciform DNA by making single-stranded nicks across the HJ at symmetrical positions within the homologous arms, yielding a 5'-phosphate and a 3'-hydroxyl group; requires a central core of homology in the junction. The consensus cleavage sequence is 5'-(A/T)TT(C/G)-3'. Cleavage occurs on the 3'-side of the TT dinucleotide at the point of strand exchange. HJ branch migration catalyzed by RuvA-RuvB allows RuvC to scan DNA until it finds its consensus sequence, where it cleaves and resolves the cruciform DNA. This is Crossover junction endodeoxyribonuclease RuvC from Chloroflexus aggregans (strain MD-66 / DSM 9485).